The following is a 247-amino-acid chain: Triosephosphate isomerase (247 aa).

A substrate-binding site is contributed by 8–10 (NWK). His95 functions as the Electrophile in the catalytic mechanism. Glu162 acts as the Proton acceptor in catalysis. Residues Gly168 and Ser207 each contribute to the substrate site.

Belongs to the triosephosphate isomerase family. As to quaternary structure, homodimer.

It is found in the cytoplasm. It catalyses the reaction D-glyceraldehyde 3-phosphate = dihydroxyacetone phosphate. The protein operates within carbohydrate biosynthesis; gluconeogenesis. It participates in carbohydrate degradation; glycolysis; D-glyceraldehyde 3-phosphate from glycerone phosphate: step 1/1. Functionally, involved in the gluconeogenesis. Catalyzes stereospecifically the conversion of dihydroxyacetone phosphate (DHAP) to D-glyceraldehyde-3-phosphate (G3P). The polypeptide is Triosephosphate isomerase (Gluconacetobacter diazotrophicus (strain ATCC 49037 / DSM 5601 / CCUG 37298 / CIP 103539 / LMG 7603 / PAl5)).